The sequence spans 502 residues: UPF0371 protein CLB_0371 (502 aa).

It belongs to the UPF0371 family.

The protein is UPF0371 protein CLB_0371 of Clostridium botulinum (strain ATCC 19397 / Type A).